The primary structure comprises 109 residues: Putative double-stranded DNA mimic protein YciU (109 aa).

It belongs to the putative dsDNA mimic protein family.

In terms of biological role, may act as a double-stranded DNA (dsDNA) mimic. Probably regulates the activity of a dsDNA-binding protein. This Salmonella paratyphi B (strain ATCC BAA-1250 / SPB7) protein is Putative double-stranded DNA mimic protein YciU.